Consider the following 499-residue polypeptide: Glycerol kinase (499 aa).

T13 provides a ligand contact to ADP. Residues T13, T14, and S15 each coordinate ATP. T13 provides a ligand contact to sn-glycerol 3-phosphate. R17 is a binding site for ADP. R83, E84, Y135, and D245 together coordinate sn-glycerol 3-phosphate. 5 residues coordinate glycerol: R83, E84, Y135, D245, and Q246. T267 and G310 together coordinate ADP. Positions 267, 310, 314, and 411 each coordinate ATP. Residues A411 and N415 each coordinate ADP.

This sequence belongs to the FGGY kinase family.

It carries out the reaction glycerol + ATP = sn-glycerol 3-phosphate + ADP + H(+). The protein operates within polyol metabolism; glycerol degradation via glycerol kinase pathway; sn-glycerol 3-phosphate from glycerol: step 1/1. Inhibited by fructose 1,6-bisphosphate (FBP). In terms of biological role, key enzyme in the regulation of glycerol uptake and metabolism. Catalyzes the phosphorylation of glycerol to yield sn-glycerol 3-phosphate. In Xylella fastidiosa (strain 9a5c), this protein is Glycerol kinase.